The primary structure comprises 460 residues: ATP synthase subunit beta (460 aa).

150 to 157 (GGAGVGKT) provides a ligand contact to ATP.

It belongs to the ATPase alpha/beta chains family. F-type ATPases have 2 components, CF(1) - the catalytic core - and CF(0) - the membrane proton channel. CF(1) has five subunits: alpha(3), beta(3), gamma(1), delta(1), epsilon(1). CF(0) has three main subunits: a(1), b(2) and c(9-12). The alpha and beta chains form an alternating ring which encloses part of the gamma chain. CF(1) is attached to CF(0) by a central stalk formed by the gamma and epsilon chains, while a peripheral stalk is formed by the delta and b chains.

Its subcellular location is the cell inner membrane. The catalysed reaction is ATP + H2O + 4 H(+)(in) = ADP + phosphate + 5 H(+)(out). Produces ATP from ADP in the presence of a proton gradient across the membrane. The catalytic sites are hosted primarily by the beta subunits. The chain is ATP synthase subunit beta from Photorhabdus laumondii subsp. laumondii (strain DSM 15139 / CIP 105565 / TT01) (Photorhabdus luminescens subsp. laumondii).